The primary structure comprises 615 residues: Dihydroxy-acid dehydratase (615 aa).

A Mg(2+)-binding site is contributed by Asp81. Cys122 is a binding site for [2Fe-2S] cluster. Mg(2+)-binding residues include Asp123 and Lys124. Lys124 is modified (N6-carboxylysine). Cys195 contacts [2Fe-2S] cluster. Residue Glu491 participates in Mg(2+) binding. Ser517 acts as the Proton acceptor in catalysis.

This sequence belongs to the IlvD/Edd family. As to quaternary structure, homodimer. It depends on [2Fe-2S] cluster as a cofactor. Requires Mg(2+) as cofactor.

It catalyses the reaction (2R)-2,3-dihydroxy-3-methylbutanoate = 3-methyl-2-oxobutanoate + H2O. The catalysed reaction is (2R,3R)-2,3-dihydroxy-3-methylpentanoate = (S)-3-methyl-2-oxopentanoate + H2O. The protein operates within amino-acid biosynthesis; L-isoleucine biosynthesis; L-isoleucine from 2-oxobutanoate: step 3/4. Its pathway is amino-acid biosynthesis; L-valine biosynthesis; L-valine from pyruvate: step 3/4. Functions in the biosynthesis of branched-chain amino acids. Catalyzes the dehydration of (2R,3R)-2,3-dihydroxy-3-methylpentanoate (2,3-dihydroxy-3-methylvalerate) into 2-oxo-3-methylpentanoate (2-oxo-3-methylvalerate) and of (2R)-2,3-dihydroxy-3-methylbutanoate (2,3-dihydroxyisovalerate) into 2-oxo-3-methylbutanoate (2-oxoisovalerate), the penultimate precursor to L-isoleucine and L-valine, respectively. The chain is Dihydroxy-acid dehydratase from Shewanella pealeana (strain ATCC 700345 / ANG-SQ1).